A 369-amino-acid chain; its full sequence is P2X receptor B (369 aa).

Topologically, residues 1–25 (MTIDWDSILSYNTIKVVRIRDRRLG) are cytoplasmic. A helical transmembrane segment spans residues 26-46 (ILHLCFLIVIVLYVVVYSAII). Residues 47–369 (KKGYVTTEEP…DKLYHNIEAL (323 aa)) are Lumenal-facing. Residues 283–296 (RHAIRLIFIQTGVI) form a pore-forming motif region.

This sequence belongs to the P2X receptor family.

The protein localises to the contractile vacuole membrane. P2X receptors are ATP-gated ion channels that play a role in intracellular calcium signaling. Not required for the purinergic response to extracellular nucleotides. Not essential for osmoregulation. Inward currents are evoked by intracellular ATP and ATP analogs. Insensitive to the P2 receptor antagonists PPADS and suramin, and also copper ions. Inhibited by sodium ions. Permeable to chloride ions. This chain is P2X receptor B (p2xB), found in Dictyostelium discoideum (Social amoeba).